The following is a 306-amino-acid chain: Acetyl-coenzyme A carboxylase carboxyl transferase subunit beta (306 aa).

One can recognise a CoA carboxyltransferase N-terminal domain in the interval 25–294; it reads LWIKCPETGE…TVVGANDDKT (270 aa).

This sequence belongs to the AccD/PCCB family. As to quaternary structure, acetyl-CoA carboxylase is a heterohexamer composed of biotin carboxyl carrier protein (AccB), biotin carboxylase (AccC) and two subunits each of ACCase subunit alpha (AccA) and ACCase subunit beta (AccD).

Its subcellular location is the cytoplasm. It carries out the reaction N(6)-carboxybiotinyl-L-lysyl-[protein] + acetyl-CoA = N(6)-biotinyl-L-lysyl-[protein] + malonyl-CoA. Its pathway is lipid metabolism; malonyl-CoA biosynthesis; malonyl-CoA from acetyl-CoA: step 1/1. Functionally, component of the acetyl coenzyme A carboxylase (ACC) complex. Biotin carboxylase (BC) catalyzes the carboxylation of biotin on its carrier protein (BCCP) and then the CO(2) group is transferred by the transcarboxylase to acetyl-CoA to form malonyl-CoA. This Allorhizobium ampelinum (strain ATCC BAA-846 / DSM 112012 / S4) (Agrobacterium vitis (strain S4)) protein is Acetyl-coenzyme A carboxylase carboxyl transferase subunit beta.